The sequence spans 229 residues: Ribonuclease T (229 aa).

One can recognise an Exonuclease domain in the interval 23–197; sequence VIIDVETAGF…YDTERTAKLF (175 aa). D26, E28, H184, and D189 together coordinate Mg(2+). H184 acts as the Proton donor/acceptor in catalysis.

This sequence belongs to the RNase T family. Homodimer. The cofactor is Mg(2+).

Its function is as follows. Trims short 3' overhangs of a variety of RNA species, leaving a one or two nucleotide 3' overhang. Responsible for the end-turnover of tRNA: specifically removes the terminal AMP residue from uncharged tRNA (tRNA-C-C-A). Also appears to be involved in tRNA biosynthesis. The sequence is that of Ribonuclease T from Haemophilus influenzae (strain ATCC 51907 / DSM 11121 / KW20 / Rd).